A 458-amino-acid chain; its full sequence is Phosphoglucosamine mutase (458 aa).

The active-site Phosphoserine intermediate is the Ser100. 4 residues coordinate Mg(2+): Ser100, Asp254, Asp256, and Asp258. Ser100 carries the post-translational modification Phosphoserine.

It belongs to the phosphohexose mutase family. Requires Mg(2+) as cofactor. Activated by phosphorylation.

It catalyses the reaction alpha-D-glucosamine 1-phosphate = D-glucosamine 6-phosphate. Catalyzes the conversion of glucosamine-6-phosphate to glucosamine-1-phosphate. The chain is Phosphoglucosamine mutase from Nocardia farcinica (strain IFM 10152).